The following is a 117-amino-acid chain: UPF0342 protein BcerKBAB4_0767 (117 aa).

The protein belongs to the UPF0342 family.

The polypeptide is UPF0342 protein BcerKBAB4_0767 (Bacillus mycoides (strain KBAB4) (Bacillus weihenstephanensis)).